Here is a 379-residue protein sequence, read N- to C-terminus: Stimulator of interferon genes protein (379 aa).

The Cytoplasmic segment spans residues 1–17 (MPHSSLHPSIPCPRGHG). A mediates interaction with ZDHHC1 and ZDHHC11 region spans residues 1 to 190 (MPHSSLHPSI…TYNQHYNNLL (190 aa)). The chain crosses the membrane as a helical span at residues 18 to 34 (AQKAALVLLSACLVTLW). Residue Lys20 forms a Glycyl lysine isopeptide (Lys-Gly) (interchain with G-Cter in ubiquitin) linkage. Residues 35-44 (GLGEPPEHTL) are Lumenal-facing. Residues 45–69 (RYLVLHLASLQLGLLLNGVCSLAEE) form a helical membrane-spanning segment. The Cytoplasmic portion of the chain corresponds to 70–91 (LRHIHSRYRGSYWRTVRACLGC). 2 S-palmitoyl cysteine lipidation sites follow: Cys88 and Cys91. Residues 92 to 106 (PLRRGALLLLSIYFY) form a helical membrane-spanning segment. Residues 107-116 (YSLPNAVGPP) are Lumenal-facing. The chain crosses the membrane as a helical span at residues 117–134 (FTWMLALLGLSQALNILL). The Cytoplasmic segment spans residues 135–379 (GLKGLAPAEI…KPLPLRTDFS (245 aa)). A Glycyl lysine isopeptide (Lys-Gly) (interchain with G-Cter in ubiquitin) cross-link involves residue Lys150. The segment at 153 to 340 (FNVAHGLAWS…RHLRQEEKEE (188 aa)) is cyclic dinucleotide-binding domain (CBD). Positions 162 and 167 each coordinate 2',3'-cGAMP. 3',3'-c-di-GMP is bound by residues Ser162 and Tyr167. Tyr167 serves as a coordination point for 2',3'-cUAMP. Thr229 bears the Phosphothreonine mark. A Glycyl lysine isopeptide (Lys-Gly) (interchain with G-Cter in ubiquitin) cross-link involves residue Lys236. A 2',3'-cGAMP-binding site is contributed by Arg238. Arg238 is a 2',3'-cUAMP binding site. Residues 238–241 (RVYS) and Thr263 contribute to the 3',3'-c-di-GMP site. Ser241 is modified (phosphoserine). Thr263 contacts 2',3'-cGAMP. Position 263 (Thr263) interacts with 2',3'-cUAMP. Lys338 participates in a covalent cross-link: Glycyl lysine isopeptide (Lys-Gly) (interchain with G-Cter in SUMO). The C-terminal tail (CTT) stretch occupies residues 340–379 (EVTVGSLKTSAVPSTSTMSQEPELLISGMEKPLPLRTDFS). Residues 341-370 (VTVGSLKTSAVPSTSTMSQEPELLISGMEK) are disordered. Residues 345 to 359 (SLKTSAVPSTSTMSQ) show a composition bias toward polar residues. Residue Thr354 is modified to Phosphothreonine. Phosphoserine; by MAP3K7 is present on Ser355. Thr356 carries the phosphothreonine modification. 2 positions are modified to phosphoserine; by TBK1: Ser358 and Ser366. Residues 363–366 (LLIS) carry the pLxIS motif motif.

This sequence belongs to the STING family. As to quaternary structure, homodimer; forms a homodimer in absence of cyclic nucleotide (c-di-GMP or cGAMP); 'Lys-63'-linked ubiquitination at Lys-150 is required for homodimerization. Homotetramer; in presence of cyclic nucleotide (c-di-GMP or cGAMP), forms tetramers and higher-order oligomers through side-by-side packing. Interacts (when phosphorylated) with IRF3; following activation and phosphorylation on the pLxIS motif by TBK1, recruits IRF3. Interacts with RIGI, MAVS and SSR2. Interacts with RNF5 and TRIM56. Interacts with TBK1; when homodimer, leading to subsequent production of IFN-beta. Interacts with IFIT1 and IFIT2. Interacts with TRIM29; this interaction induces STING1 ubiquitination and subsequent degradation. Associates with the MHC-II complex. Interacts with STEEP1; interaction takes place upon cGAMP-activation and STING1 phosphorylation by MAP3K7/TAK1 and promotes STING1 translocation to COPII vesicles. Interacts with SEC24A, SEC24B, and SEC24C; promoting translocation to COPII vesicles. Interacts (when ubiquitinated) with SQSTM1; leading to relocalization to autophagosomes. Interacts with SURF4. Interacts with HNRNPA2B1. Interacts with ZDHHC1; ZDHHC1 constitutively interacts with STING1 and in presence of DNA viruses activates it by promoting its cGAMP-induced oligomerization and the recruitment of downstream signaling components. Interacts with ZDHHC11; in presence of DNA viruses promotes the recruitment of IRF3 to STING1. Interacts with TOMM70. Interacts with isoform IFI16-beta of IFI16. Interacts with TAB1; promoting recruitment of TAB1 to the endoplasmic reticulum membrane and subsequent activation of MAP3K7/TAK1. Interacts (via transmembrane domain) with TMEM203. Interacts with DDX41. Interacts with TMEM120A (via C-terminal domain); regulates the trafficking of STING1 from the ER to the ER-Golgi intermediate compartment to elicit antiviral effects. (Microbial infection) Interacts with human papillomavirus (HPV) protein E7. In terms of assembly, (Microbial infection) Interacts with adenovirus early E1A protein. As to quaternary structure, (Microbial infection) Interacts with herpes simplex virus 1 protein ICP34.5; this interaction inhibits the intracellular DNA sensing pathway. (Microbial infection) Interacts with Chikungunya virus non-structural protein 1; this interaction results in inhibition of cGAS-STING signaling and increased levels of palmitoylated nsP1 and protein stabilization. In terms of assembly, (Microbial infection) Interacts with human cytomegalovirus proteins UL94, UL42 and UL138; these interactions result in the inhibition of cGAS-STING signaling. As to quaternary structure, (Microbial infection) Interacts with varivella virus protein 39; this interaction results in the inhibition of cGAS-STING signaling. In terms of processing, phosphorylation by TBK1 leads to activation and production of IFN-beta. Following cyclic nucleotide (c-di-GMP or cGAMP)-binding, activation and translocation from the endoplasmic reticulum, STING1 is phosphorylated by TBK1 at Ser-366 in the pLxIS motif. The phosphorylated pLxIS motif constitutes an IRF3-binding motif, leading to recruitment of the transcription factor IRF3 to induce type-I interferons and other cytokines. The phosphorylated pLxIS motif facilitates SENP2 recruitment during late phase of viral infection. Phosphorylated on tyrosine residues upon MHC-II aggregation. Dephosphorylation by PPP6C leads to inactivation and decreased production of IFN-beta. Phosphorylation at Ser-358 is also required to activate IRF3. Phosphorylation at Ser-355 by MAP3K7/TAK1 facilitates its interaction with STEEP1, promoting STING1 translocation to COPII vesicles. Ubiquitinated. Ubiquitinated via 'Lys-63'-linked ubiquitin chains in response to double-stranded DNA treatment, leading to relocalization to autophagosomes and subsequent degradation; this process is dependent on SQSTM1. 'Lys-63'-linked ubiquitination mediated by TRIM56 at Lys-150 promotes homodimerization and recruitment of the antiviral kinase TBK1 and subsequent production of IFN-beta. 'Lys-48'-linked polyubiquitination at Lys-150 occurring after viral infection is mediated by RNF5 and leads to proteasomal degradation. 'Lys-11'-linked polyubiquitination at Lys-150 by RNF26 leads to stabilize STING1: it protects STING1 from RNF5-mediated 'Lys-48'-linked polyubiquitination. 'Lys-33'-linked and 'Lys-48'-linked deubiquitinated by USP20; leading to its stabilization and promotion of innate antiviral response. 'Lys-48'-linked deubiquitinated by USP44; leading to its stabilization and promotion of innate antiviral response. Deubiquitinated by USP13; leading to inhibition of innate antiviral response. 'Lys-63'-linked deubiquitinated by USP49; leading to inhibition of the subsequent recruitment of TBK1 to the signaling complex. 'Lys-63'-linked ubiquitination mediated by RNF39 promotes the activation of the cGAS-STING pathway. MARCHF5-mediated ubiquitination prevents the oxidation-induced polymer formation. Post-translationally, (Microbial infection) Deubiquitinated by Epstein-Barr virus BPLF1 on both 'Lys-48' and 'Lys-63'-linked ubiquitin chains; leading to inhibition of cGAS-STING signaling. In terms of processing, sumoylated at Lys-338 by TRIM38 during the early phase of viral infection, promoting its stability by preventing its relocalization to autophagosomes and subsequent degradation. Desumoylated by SENP2 during the late phase of viral infection. Palmitoylation takes place in the Golgi apparatus and creates a platform for the recruitment of TBK1. As to expression, ubiquitously expressed. Expressed in skin endothelial cells, alveolar type 2 pneumocytes, bronchial epithelium and alveolar macrophages.

Its subcellular location is the endoplasmic reticulum membrane. The protein resides in the cytoplasm. It localises to the perinuclear region. The protein localises to the endoplasmic reticulum-Golgi intermediate compartment membrane. It is found in the golgi apparatus membrane. Its subcellular location is the cytoplasmic vesicle. The protein resides in the autophagosome membrane. It localises to the mitochondrion outer membrane. The protein localises to the cell membrane. The catalysed reaction is H(+)(in) = H(+)(out). With respect to regulation, activated upon binding to the hydrolysis-resistant 2'3'-cG(s)A(s)MP, an analog of cGAMP, in which phosphodiester linkages are replaced by phosphothioate linkages. Specifically inhibited by small-molecule H-151 (N-(4-ethylphenyl)-N'-1H-indol-3-yl-urea), which covalently binds Cys-91 and prevents palmitoylation and subsequent activation of STING1. In contrast to mouse protein, not activated by anticancer molecule 5,6-dimethylxanthenone 4-acetic acid (DMXAA). Inhibited by compound 18 ([(3S,4S)-2-(4-tert-butyl-3-chlorophenyl)-3-(2,3-dihydro-1,4-benzodioxin-6-yl)-7-fluoro-1-oxo-1,2,3,4-tetrahydroisoquinolin-4-yl]acetate), a competitive inhibitor with slow dissociation kinetics and good oral bioavailability. Homooligomerization and ability to promote the production of type I interferons is activated by C53, a small benzothiazinone-like compound that binds to the transmembrane regions. in the area of the putative pore. In contrast, compound C53, directly inhibits the proton channel activity and facilitate MAP1LC3B/LC3B lipidation and autophagosome formation. Facilitator of innate immune signaling that acts as a sensor of cytosolic DNA from bacteria and viruses and promotes the production of type I interferon (IFN-alpha and IFN-beta). Innate immune response is triggered in response to non-CpG double-stranded DNA from viruses and bacteria delivered to the cytoplasm. Acts by binding cyclic dinucleotides: recognizes and binds cyclic di-GMP (c-di-GMP), a second messenger produced by bacteria, cyclic UMP-AMP (2',3'-cUAMP), and cyclic GMP-AMP (cGAMP), a messenger produced by CGAS in response to DNA virus in the cytosol. Upon binding to c-di-GMP, cUAMP or cGAMP, STING1 oligomerizes, translocates from the endoplasmic reticulum and is phosphorylated by TBK1 on the pLxIS motif, leading to recruitment and subsequent activation of the transcription factor IRF3 to induce expression of type I interferon and exert a potent anti-viral state. Exhibits 2',3' phosphodiester linkage-specific ligand recognition: can bind both 2'-3' linked cGAMP (2'-3'-cGAMP) and 3'-3' linked cGAMP but is preferentially activated by 2'-3' linked cGAMP. The preference for 2'-3'-cGAMP, compared to other linkage isomers is probably due to the ligand itself, whichs adopts an organized free-ligand conformation that resembles the STING1-bound conformation and pays low energy costs in changing into the active conformation. In addition to promote the production of type I interferons, plays a direct role in autophagy. Following cGAMP-binding, STING1 buds from the endoplasmic reticulum into COPII vesicles, which then form the endoplasmic reticulum-Golgi intermediate compartment (ERGIC). The ERGIC serves as the membrane source for WIPI2 recruitment and LC3 lipidation, leading to formation of autophagosomes that target cytosolic DNA or DNA viruses for degradation by the lysosome. Promotes autophagy by acting as a proton channel that directs proton efflux from the Golgi to facilitate MAP1LC3B/LC3B lipidation. The autophagy- and interferon-inducing activities can be uncoupled and autophagy induction is independent of TBK1 phosphorylation. Autophagy is also triggered upon infection by bacteria: following c-di-GMP-binding, which is produced by live Gram-positive bacteria, promotes reticulophagy. May be involved in translocon function, the translocon possibly being able to influence the induction of type I interferons. May be involved in transduction of apoptotic signals via its association with the major histocompatibility complex class II (MHC-II). In terms of biological role, (Microbial infection) Antiviral activity is antagonized by oncoproteins, such as papillomavirus (HPV) protein E7 and adenovirus early E1A protein. Such oncoproteins prevent the ability to sense cytosolic DNA. In Homo sapiens (Human), this protein is Stimulator of interferon genes protein.